Reading from the N-terminus, the 107-residue chain is MHYLYLFISIATEIIGTSFLKTSEGFTKLWPTLGTLLSFGICFYFLSLTIKFLPLNITYATWAGLGLVLTTIISVIVFKENVNLISIISIGLIVIGVVLLNVFGESH.

The next 4 helical transmembrane spans lie at 1–21 (MHYL…SFLK), 26–46 (FTKL…FYFL), 57–77 (ITYA…SVIV), and 84–104 (LISI…NVFG).

This sequence belongs to the drug/metabolite transporter (DMT) superfamily. Small multidrug resistance (SMR) (TC 2.A.7.1) family.

It is found in the cell membrane. Functionally, multidrug exporter. Is implicated for the resistance to bacteriocidal quaternary ammonium compounds. In Staphylococcus sp. (strain ST94), this protein is Quaternary ammonium compound-resistance protein QacG (qacG).